A 438-amino-acid polypeptide reads, in one-letter code: GTPase Obg (438 aa).

The Obg domain maps to 2–160; it reads NMFVDQIKIE…HYLELELKML (159 aa). In terms of domain architecture, OBG-type G spans 161–337; sequence ADVGLIGFPS…LMQLTADLLD (177 aa). GTP is bound by residues 167-174, 192-196, 214-217, 284-287, and 318-320; these read GFPSVGKS, FTTLT, DMPG, TKMD, and SAV. 2 residues coordinate Mg(2+): Ser174 and Thr194. Positions 360–438 constitute an OCT domain; sequence PDKKDEADFT…IEKFVFEFIQ (79 aa).

It belongs to the TRAFAC class OBG-HflX-like GTPase superfamily. OBG GTPase family. In terms of assembly, monomer. Requires Mg(2+) as cofactor.

The protein localises to the cytoplasm. Its function is as follows. An essential GTPase which binds GTP, GDP and possibly (p)ppGpp with moderate affinity, with high nucleotide exchange rates and a fairly low GTP hydrolysis rate. Plays a role in control of the cell cycle, stress response, ribosome biogenesis and in those bacteria that undergo differentiation, in morphogenesis control. The polypeptide is GTPase Obg (Limosilactobacillus reuteri (strain DSM 20016) (Lactobacillus reuteri)).